The primary structure comprises 158 residues: MGRFIFGSFGLLVVFLSLSGTGADFDCPPGWSAYDRYCYQAFSEPKTWEDAESFCMEGVKDSHLVSVESSGEADFVAQLVNENIKTSFRYVWIGLRIQNKEQQCRSEWSDASSVSYENLIKKVSKKCYGLKKGTELRTWFNVYCAELNPFICKFPPEC.

The first 23 residues, 1–23, serve as a signal peptide directing secretion; the sequence is MGRFIFGSFGLLVVFLSLSGTGA. 3 disulfides stabilise this stretch: C27-C38, C55-C152, and C127-C144. The region spanning 34–153 is the C-type lectin domain; it reads YDRYCYQAFS…CAELNPFICK (120 aa).

Belongs to the snaclec family. Tetramer of heterodimers of alpha and beta subunits (alphabeta)(4); disulfide-linked. In terms of tissue distribution, expressed by the venom gland.

Its subcellular location is the secreted. Functionally, snaclec that induces human platelet aggregation in the absence of any cofactor with the EC(50) of 0.25 nM and causes tyrosine phosphorylation in human platelets. Antibodies against either platelet GPIbalpha (GP1BA) or GPVI (GP6) inhibit alboaggregin D-induced platelet aggregation. Only the combination of these two antibodies completely inhibit aggregation, suggesting that it acts through both GPIbalpha (GP1BA) and GPVI (GP6). The sequence is that of Snaclec alboaggregin-D subunit alpha from Trimeresurus albolabris (White-lipped pit viper).